Here is a 321-residue protein sequence, read N- to C-terminus: Secreted RxLR effector protein 71 (321 aa).

An N-terminal signal peptide occupies residues 1-23; that stretch reads MRPTGWRWPVLSLLLVLLPFQAA. The RxLR motif lies at 84–87; that stretch reads RSLR. Asn-114 carries an N-linked (GlcNAc...) asparagine glycan. The disordered stretch occupies residues 210–237; the sequence is VSLGRDGNGPVRGISSSPTRLTRPRMGG.

The protein belongs to the RxLR effector family.

The protein resides in the secreted. It is found in the host cell. Functionally, secreted effector that partially suppresses the host cell death induced by cell death-inducing proteins. This is Secreted RxLR effector protein 71 from Plasmopara viticola (Downy mildew of grapevine).